We begin with the raw amino-acid sequence, 221 residues long: Transcription factor HES-4 (221 aa).

Over residues 1-22 (MAADTPGKPSASPMAGAPASAS) the composition is skewed to low complexity. The disordered stretch occupies residues 1 to 49 (MAADTPGKPSASPMAGAPASASRTPDKPRSAAEHRKSSKPVMEKRRRAR). Residues 24 to 35 (TPDKPRSAAEHR) are compositionally biased toward basic and acidic residues. Residues 34-91 (HRKSSKPVMEKRRRARINESLAQLKTLILDALRKESSRHSKLEKADILEMTVRHLRSL) form the bHLH domain. One can recognise an Orange domain in the interval 110–143 (YRAGFHECLAEVNRFLAGCEGVPADVRSRLLGHL). A disordered region spans residues 201-221 (LPAAPRAGPQGPGGPWRPWLR). The WRPW motif signature appears at 216-219 (WRPW).

As to quaternary structure, transcription repression requires formation of a complex with a corepressor protein of the Groucho/TLE family.

It localises to the nucleus. Transcriptional repressor. Binds DNA on N-box motifs: 5'-CACNAG-3'. The sequence is that of Transcription factor HES-4 (HES4) from Homo sapiens (Human).